The chain runs to 213 residues: UPF0056 membrane protein AF_2111 (213 aa).

The next 6 helical transmembrane spans lie at 1–21, 51–71, 75–95, 118–138, 142–162, and 181–201; these read MDIAGYLSFFFASFTTLFIII, IIAFLILFITMVTGGKILDYF, ISSLKIAGGILLFISSVDILL, VFPLALPLYTGPGAITAGIVL, AGDVVMKLLVVLSAALVYSIV, and ADIAARILAIFLAAIAVEFVF.

Belongs to the UPF0056 (MarC) family.

It localises to the cell membrane. The sequence is that of UPF0056 membrane protein AF_2111 from Archaeoglobus fulgidus (strain ATCC 49558 / DSM 4304 / JCM 9628 / NBRC 100126 / VC-16).